A 151-amino-acid chain; its full sequence is MGRMHNPGKGMAKSAIPYRRSVPSWQKMTAEEVQDQIVKMAKKGLRPSQIGVILRDSHGVGQVRRLAGNKIFRILKSKGMAPELPEDLYHLVKKAVAIRKHLERSRKDIDSKYRLILVESRIHRLARYYKTKRQLPPTWKYESGTAASLVS.

This sequence belongs to the universal ribosomal protein uS15 family. In terms of assembly, component of the small ribosomal subunit. Part of the small subunit (SSU) processome, composed of more than 70 proteins and the RNA chaperone small nucleolar RNA (snoRNA) U3.

Its subcellular location is the cytoplasm. It is found in the nucleus. It localises to the nucleolus. Functionally, component of the small ribosomal subunit. The ribosome is a large ribonucleoprotein complex responsible for the synthesis of proteins in the cell. Part of the small subunit (SSU) processome, first precursor of the small eukaryotic ribosomal subunit. During the assembly of the SSU processome in the nucleolus, many ribosome biogenesis factors, an RNA chaperone and ribosomal proteins associate with the nascent pre-rRNA and work in concert to generate RNA folding, modifications, rearrangements and cleavage as well as targeted degradation of pre-ribosomal RNA by the RNA exosome. This is Small ribosomal subunit protein uS15 (rps-13) from Caenorhabditis elegans.